The following is an 856-amino-acid chain: 3-hydroxy-3-methylglutaryl-coenzyme A reductase (856 aa).

4 consecutive transmembrane segments (helical) span residues 12–32 (FCASHPWEVIVATLTLTVCML), 89–109 (ILGIAGLFTVFSSFVFSSSVI), 123–143 (LFFFLLLIDLSKATVLAQFAL), and 190–210 (VLCCFACMSVIVNYVVFMTFY). A glycan (N-linked (GlcNAc...) asparagine) is linked at asparagine 326. The helical transmembrane segment at 344 to 364 (SADHIVILILLLALAVKFVFF) threads the bilayer. The segment at 365-443 (ETRDELTTTR…CEVMALVTSG (79 aa)) is linker. N-linked (GlcNAc...) asparagine glycosylation occurs at asparagine 412. The segment at 443–771 (GHIAGYQLEK…SCTMPSIEIG (329 aa)) is catalytic. Catalysis depends on charge relay system residues glutamate 528 and lysine 659. Asparagine 700 carries N-linked (GlcNAc...) asparagine glycosylation. The active-site Charge relay system is aspartate 735. Catalysis depends on histidine 834, which acts as the Proton donor. The interval 836-856 (RHNRSSVSTSGSEPSTPACKS) is disordered. N-linked (GlcNAc...) asparagine glycosylation occurs at asparagine 838. Low complexity predominate over residues 840-856 (SSVSTSGSEPSTPACKS).

It belongs to the HMG-CoA reductase family.

It is found in the endoplasmic reticulum membrane. The catalysed reaction is (R)-mevalonate + 2 NADP(+) + CoA = (3S)-3-hydroxy-3-methylglutaryl-CoA + 2 NADPH + 2 H(+). Its pathway is metabolic intermediate biosynthesis; (R)-mevalonate biosynthesis; (R)-mevalonate from acetyl-CoA: step 3/3. With respect to regulation, the activity of HMG-CoA-reductase is suppressed by exogenous mevalonate. Functionally, synthesis of mevalonate for the production of non-sterol isoprenoids, which are essential for growth differentiation. This chain is 3-hydroxy-3-methylglutaryl-coenzyme A reductase, found in Blattella germanica (German cockroach).